Consider the following 351-residue polypeptide: Prostaglandin reductase 2 (351 aa).

Residue 99–100 (FY) coordinates substrate. NADP(+)-binding positions include 165–168 (GACG), lysine 192, tyrosine 208, asparagine 231, 253–259 (CGQISQY), 287–289 (FMV), and asparagine 337. 288–290 (MVL) provides a ligand contact to substrate.

The protein belongs to the NADP-dependent oxidoreductase L4BD family. As to quaternary structure, monomer.

The protein localises to the cytoplasm. The enzyme catalyses 13,14-dihydro-15-oxo-prostaglandin E2 + NAD(+) = 15-oxoprostaglandin E2 + NADH + H(+). It catalyses the reaction 13,14-dihydro-15-oxo-prostaglandin E2 + NADP(+) = 15-oxoprostaglandin E2 + NADPH + H(+). The catalysed reaction is 13,14-dihydro-15-oxo-PGF2alpha + NADP(+) = 15-oxoprostaglandin F2alpha + NADPH + H(+). It carries out the reaction 13,14-dihydro-15-oxo-prostaglandin E1 + NADP(+) = 15-oxoprostaglandin E1 + NADPH + H(+). The enzyme catalyses 13,14-dihydro-15-oxo-prostaglandin F1alpha + NADP(+) = 15-oxoprostaglandin F1alpha + NADPH + H(+). Functionally, functions as 15-oxo-prostaglandin 13-reductase and acts on 15-keto-PGE1, 15-keto-PGE2, 15-keto-PGE1-alpha and 15-keto-PGE2-alpha with highest activity towards 15-keto-PGE2. Overexpression represses transcriptional activity of PPARG and inhibits adipocyte differentiation. This Rattus norvegicus (Rat) protein is Prostaglandin reductase 2.